The following is a 65-amino-acid chain: Toxin Co52 (65 aa).

Residues 2–65 enclose the LCN-type CS-alpha/beta domain; it reads EDGYLVDKTG…PTWPLPNKTC (64 aa). 4 cysteine pairs are disulfide-bonded: Cys-12–Cys-65, Cys-16–Cys-41, Cys-25–Cys-46, and Cys-29–Cys-48.

As to expression, expressed by the venom gland.

Its subcellular location is the secreted. In terms of biological role, beta toxins bind voltage-independently at site-4 of sodium channels (Nav) and shift the voltage of activation toward more negative potentials thereby affecting sodium channel activation and promoting spontaneous and repetitive firing. Not toxic to mice, chicks, crickets or woodlice (at 5 ug). This chain is Toxin Co52, found in Centruroides ornatus (Scorpion).